The sequence spans 547 residues: Zinc metalloproteinase-disintegrin-like BjussuMP-1 (547 aa).

Residues 1-133 constitute a propeptide that is removed on maturation; sequence EFKVNGEPVV…KKASKLVVTA (133 aa). One can recognise a Peptidase M12B domain in the interval 141 to 337; that stretch reads RYVEIVVVVD…HNPQCILNEP (197 aa). E144 and D228 together coordinate Ca(2+). 3 cysteine pairs are disulfide-bonded: C252–C332, C292–C316, and C294–C299. H277 contributes to the Zn(2+) binding site. E278 is an active-site residue. The Zn(2+) site is built by H281 and H287. The Ca(2+) site is built by C332, N335, V341, N344, L346, E348, E351, and D354. In terms of domain architecture, Disintegrin spans 339-421; it reads LTVSGNELLE…DCPRNRFHRN (83 aa). Cystine bridges form between C353–C363, C362–C385, C376–C382, C381–C406, C394–C413, C425–C437, C444–C494, C459–C501, C472–C482, C489–C526, and C520–C531. N451 carries an N-linked (GlcNAc...) asparagine glycan. An N-linked (GlcNAc...) asparagine glycan is attached at N504.

This sequence belongs to the venom metalloproteinase (M12B) family. P-III subfamily. P-IIIa sub-subfamily. As to quaternary structure, monomer. It depends on Zn(2+) as a cofactor. As to expression, expressed by the venom gland.

It is found in the secreted. Its activity is regulated as follows. Completely inhibited by EDTA, EGTA, 1,10-phenanthroline, and partially by beta-mercaptoethanol. Is not inhibited by aprotinin and leupeptin. In terms of biological role, this protein is a zinc metalloprotease from snake venom that causes hemorrhage in mice after intradermal injection. It inhibits platelet aggregation induced by collagen and ADP. Has moderate edema activity, but no myotoxic activity. It hydrolyzes the Aalpha-chain and more slowly the Bbeta-chain of fibrinogen, without affecting the gamma-chains. It also shows proteolytic activity on casein. It is unable to clot plasma. It also shows bactericidal activity against E.coli and S.aureus. This chain is Zinc metalloproteinase-disintegrin-like BjussuMP-1, found in Bothrops jararacussu (Jararacussu).